The following is a 178-amino-acid chain: NAD(P)H-quinone oxidoreductase subunit 6, chloroplastic (178 aa).

The next 5 membrane-spanning stretches (helical) occupy residues 10 to 30 (FILV…VLFT), 32 to 52 (PIYS…FYIL), 61 to 81 (AQLL…VMFM), 94 to 114 (LWTI…FSLI), and 154 to 174 (FFLP…GAIA).

It belongs to the complex I subunit 6 family. As to quaternary structure, NDH is composed of at least 16 different subunits, 5 of which are encoded in the nucleus.

Its subcellular location is the plastid. The protein localises to the chloroplast thylakoid membrane. It carries out the reaction a plastoquinone + NADH + (n+1) H(+)(in) = a plastoquinol + NAD(+) + n H(+)(out). The catalysed reaction is a plastoquinone + NADPH + (n+1) H(+)(in) = a plastoquinol + NADP(+) + n H(+)(out). Its function is as follows. NDH shuttles electrons from NAD(P)H:plastoquinone, via FMN and iron-sulfur (Fe-S) centers, to quinones in the photosynthetic chain and possibly in a chloroplast respiratory chain. The immediate electron acceptor for the enzyme in this species is believed to be plastoquinone. Couples the redox reaction to proton translocation, and thus conserves the redox energy in a proton gradient. The sequence is that of NAD(P)H-quinone oxidoreductase subunit 6, chloroplastic (ndhG) from Citrus sinensis (Sweet orange).